A 401-amino-acid chain; its full sequence is Cytochrome P450 BJ-1 (401 aa).

C350 contacts heme.

This sequence belongs to the cytochrome P450 family. Heme serves as cofactor.

In terms of biological role, cytochromes P450 are a group of heme-thiolate monooxygenases. They oxidize a variety of structurally unrelated compounds, including steroids, fatty acids, and xenobiotics. The chain is Cytochrome P450 BJ-1 (cyp112) from Bradyrhizobium diazoefficiens (strain JCM 10833 / BCRC 13528 / IAM 13628 / NBRC 14792 / USDA 110).